Here is a 613-residue protein sequence, read N- to C-terminus: MIPYRSRTSTHGRNMAGARGLWRATGMTDSDFGKPIIAVVNSFTQFVPGHVHLKDLGQLVAREIEAAGGVAKEFNTIAVDDGIAMGHDGMLYSLPSREIIADSVEYMVNAHCADAMVCISNCDKITPGMMMAAMRLDIPVVFVSGGPMEAGKVNIDGELRAVDLIDAMIEAANPDRTDAEVDEFEKNACPTCGSCSGMFTANSMNCLAEALGLALPGNGSTLATHADREALFRRAGRRIVELTKAYYEGGDTGVSARGIATKAAFENAITLDIAMGGSTNTILHLLAMAREGEVDFTLADIDRLSRVTPCLCKVAPAVQNVHMEDVHRAGGIFGILGELGRAGKLDTSVRTIHEDTMAEALSKWDIAVTNNPEVQELFLAAPGGVRTTQAFSQARRYKDLDTDREKGVIRSAKHAFSKDGGLAVLFGNIAEMGCVVKTAGVDDSILKFSGPAVICESQEEACERILKKRVKAGDVVIIRYEGPRGGPGMQEMLYPTSYLKAMQLGKECALITDGRFSGGTSGLSIGHVSPEAAEGGAIGLLHEGDIIEIDIPNRTINAKVSAEEFAKRRAEMDAKGAAAWKPVEERPRKVSRALKVYAAHVGNASLGAVRLDP.

Asp81 serves as a coordination point for Mg(2+). Cys122 contributes to the [2Fe-2S] cluster binding site. Asp123 and Lys124 together coordinate Mg(2+). Lys124 is modified (N6-carboxylysine). Cys195 contributes to the [2Fe-2S] cluster binding site. Residue Glu491 coordinates Mg(2+). Ser517 acts as the Proton acceptor in catalysis.

It belongs to the IlvD/Edd family. Homodimer. [2Fe-2S] cluster serves as cofactor. Requires Mg(2+) as cofactor.

It carries out the reaction (2R)-2,3-dihydroxy-3-methylbutanoate = 3-methyl-2-oxobutanoate + H2O. The enzyme catalyses (2R,3R)-2,3-dihydroxy-3-methylpentanoate = (S)-3-methyl-2-oxopentanoate + H2O. It functions in the pathway amino-acid biosynthesis; L-isoleucine biosynthesis; L-isoleucine from 2-oxobutanoate: step 3/4. It participates in amino-acid biosynthesis; L-valine biosynthesis; L-valine from pyruvate: step 3/4. Functions in the biosynthesis of branched-chain amino acids. Catalyzes the dehydration of (2R,3R)-2,3-dihydroxy-3-methylpentanoate (2,3-dihydroxy-3-methylvalerate) into 2-oxo-3-methylpentanoate (2-oxo-3-methylvalerate) and of (2R)-2,3-dihydroxy-3-methylbutanoate (2,3-dihydroxyisovalerate) into 2-oxo-3-methylbutanoate (2-oxoisovalerate), the penultimate precursor to L-isoleucine and L-valine, respectively. This is Dihydroxy-acid dehydratase from Hyphomonas neptunium (strain ATCC 15444).